The following is a 342-amino-acid chain: Heat-inducible transcription repressor HrcA (342 aa).

The protein belongs to the HrcA family.

Functionally, negative regulator of class I heat shock genes (grpE-dnaK-dnaJ and groELS operons). Prevents heat-shock induction of these operons. The chain is Heat-inducible transcription repressor HrcA from Acholeplasma laidlawii.